The following is a 433-amino-acid chain: Protein slt1 (433 aa).

Disordered regions lie at residues 159–184 (SPEESSESQAEVADQQTGPYSTSEYA), 200–234 (NAPEQQSGPDVAELNTLPNRSKTSSQASVSDEELS), and 252–433 (SNKR…DEDA). Polar residues-rich tracts occupy residues 172–184 (DQQTGPYSTSEYA) and 215–228 (TLPNRSKTSSQASV). A phosphoserine mark is found at Ser227, Ser229, and Ser269. Residues 343–353 (IDTKAGEKLTD) are compositionally biased toward basic and acidic residues. The span at 385-421 (EGSNNHEQGSFNEPKSNVDSNDSASPKRPSSQASLRH) shows a compositional bias: polar residues. Ser409, Ser415, and Ser418 each carry phosphoserine.

In Schizosaccharomyces pombe (strain 972 / ATCC 24843) (Fission yeast), this protein is Protein slt1 (slt1).